The chain runs to 212 residues: Hevein-like preproprotein (212 aa).

A signal peptide spans 1–21 (MKIRLSITIILLSYTVATVAG). Positions 22–64 (QQCGRQGGGRTCPGNICCSQYGYCGTTADYCSPTNNCQSNCWG) constitute a Chitin-binding type-1 domain. 7 disulfide bridges follow: Cys24/Cys39, Cys33/Cys45, Cys38/Cys52, Cys58/Cys62, Cys100/Cys132, Cys121/Cys155, and Cys135/Cys191. The Barwin domain maps to 72–193 (ESASNVRATY…VDYQFVDCGN (122 aa)).

CB-HEL interacts strongly with a fungal fruiting body lectin.

Its subcellular location is the vacuole. Its function is as follows. Fungal growth inhibitors. Neither CB-HEL nor CD-HEL have chitinase activity, but both have antimicrobial activities. CD-HEL has RNase, but no DNase activity. The chain is Hevein-like preproprotein (HEL) from Arabidopsis thaliana (Mouse-ear cress).